Here is a 214-residue protein sequence, read N- to C-terminus: Single-pass membrane and coiled-coil domain-containing protein 1 (214 aa).

The stretch at 5-40 (TTTLISLKEAMKRVDNKLRALDTQFKELDVTKDNLT) forms a coiled coil. The chain crosses the membrane as a helical span at residues 59 to 81 (IWTAALALGFTSMELNIVYSYVI). The disordered stretch occupies residues 193 to 214 (KQAQDPENSRAPLKELMPPVKD).

It is found in the membrane. The chain is Single-pass membrane and coiled-coil domain-containing protein 1 (Smco1) from Mus musculus (Mouse).